The primary structure comprises 151 residues: Phosphopantetheine adenylyltransferase (151 aa).

Serine 9 serves as a coordination point for substrate. ATP-binding positions include serine 9–phenylalanine 10 and histidine 17. 3 residues coordinate substrate: lysine 41, threonine 73, and arginine 87. ATP contacts are provided by residues glycine 88 to arginine 90, glutamate 98, and lysine 122 to threonine 128.

The protein belongs to the bacterial CoaD family. Homohexamer. Mg(2+) is required as a cofactor.

It is found in the cytoplasm. It carries out the reaction (R)-4'-phosphopantetheine + ATP + H(+) = 3'-dephospho-CoA + diphosphate. Its pathway is cofactor biosynthesis; coenzyme A biosynthesis; CoA from (R)-pantothenate: step 4/5. Reversibly transfers an adenylyl group from ATP to 4'-phosphopantetheine, yielding dephospho-CoA (dPCoA) and pyrophosphate. The protein is Phosphopantetheine adenylyltransferase of Christiangramia forsetii (strain DSM 17595 / CGMCC 1.15422 / KT0803) (Gramella forsetii).